Consider the following 438-residue polypeptide: Cobyrinate a,c-diamide synthase (438 aa).

Positions Thr242–Ala426 constitute a GATase cobBQ-type domain. The active-site Nucleophile is Cys325.

It belongs to the CobB/CbiA family. The cofactor is Mg(2+).

It catalyses the reaction cob(II)yrinate + 2 L-glutamine + 2 ATP + 2 H2O = cob(II)yrinate a,c diamide + 2 L-glutamate + 2 ADP + 2 phosphate + 2 H(+). It participates in cofactor biosynthesis; adenosylcobalamin biosynthesis; cob(II)yrinate a,c-diamide from sirohydrochlorin (anaerobic route): step 10/10. Its function is as follows. Catalyzes the ATP-dependent amidation of the two carboxylate groups at positions a and c of cobyrinate, using either L-glutamine or ammonia as the nitrogen source. The protein is Cobyrinate a,c-diamide synthase of Herminiimonas arsenicoxydans.